The following is a 345-amino-acid chain: tRNA dimethylallyltransferase (345 aa).

Residue 9-16 coordinates ATP; sequence GPTASGKS. 11–16 is a substrate binding site; the sequence is TASGKS. 2 interaction with substrate tRNA regions span residues 34-37 and 195-199; these read DSMQ and QRMIR.

It belongs to the IPP transferase family. As to quaternary structure, monomer. Mg(2+) serves as cofactor.

It carries out the reaction adenosine(37) in tRNA + dimethylallyl diphosphate = N(6)-dimethylallyladenosine(37) in tRNA + diphosphate. Functionally, catalyzes the transfer of a dimethylallyl group onto the adenine at position 37 in tRNAs that read codons beginning with uridine, leading to the formation of N6-(dimethylallyl)adenosine (i(6)A). This is tRNA dimethylallyltransferase from Orientia tsutsugamushi (strain Ikeda) (Rickettsia tsutsugamushi).